The primary structure comprises 181 residues: Peptidyl-tRNA hydrolase (181 aa).

Tyrosine 14 contacts tRNA. The Proton acceptor role is filled by histidine 19. Positions 60, 62, and 106 each coordinate tRNA.

This sequence belongs to the PTH family. In terms of assembly, monomer.

The protein resides in the cytoplasm. It carries out the reaction an N-acyl-L-alpha-aminoacyl-tRNA + H2O = an N-acyl-L-amino acid + a tRNA + H(+). Its function is as follows. Hydrolyzes ribosome-free peptidyl-tRNAs (with 1 or more amino acids incorporated), which drop off the ribosome during protein synthesis, or as a result of ribosome stalling. Catalyzes the release of premature peptidyl moieties from peptidyl-tRNA molecules trapped in stalled 50S ribosomal subunits, and thus maintains levels of free tRNAs and 50S ribosomes. The protein is Peptidyl-tRNA hydrolase of Campylobacter curvus (strain 525.92).